Reading from the N-terminus, the 213-residue chain is Adenylate kinase (213 aa).

Gly10–Thr15 provides a ligand contact to ATP. Residues Ser30 to Val59 form an NMP region. AMP-binding positions include Thr31, Arg36, Asp57–Val59, Gly86–Arg89, and Gln93. Positions Gly127–Asp160 are LID. Residues Arg128 and Thr137–Phe138 each bind ATP. AMP-binding residues include Arg157 and Arg168. Gln196 lines the ATP pocket.

This sequence belongs to the adenylate kinase family. In terms of assembly, monomer.

It localises to the cytoplasm. The catalysed reaction is AMP + ATP = 2 ADP. It participates in purine metabolism; AMP biosynthesis via salvage pathway; AMP from ADP: step 1/1. In terms of biological role, catalyzes the reversible transfer of the terminal phosphate group between ATP and AMP. Plays an important role in cellular energy homeostasis and in adenine nucleotide metabolism. The polypeptide is Adenylate kinase (Streptococcus suis (strain 98HAH33)).